The chain runs to 469 residues: Zinc transporter SLC39A7 (469 aa).

A helical membrane pass occupies residues 10–30 (WVAVGLLTWATLGLLVAELGG). Composition is skewed to basic and acidic residues over residues 42–56 (FHGH…DFHH) and 66–114 (HTHE…EHSR). Residues 42–121 (FHGHSHRHSH…HSRGGYGESG (80 aa)) form a disordered region. Pros-methylhistidine is present on H66. The next 3 membrane-spanning stretches (helical) occupy residues 138–158 (ALGA…LIPV), 169–189 (LQIL…LHLI), and 214–234 (GPIL…LVVE). Residues 242-263 (GGHGHSHGHGHAHSHTHGSHGH) are compositionally biased toward basic residues. The tract at residues 242-310 (GGHGHSHGHG…VRPQNAEEEK (69 aa)) is disordered. Residues 264 to 285 (GRQECSTKEKQSSEEEEKETRG) are compositionally biased toward basic and acidic residues. S275 and S276 each carry phosphoserine. Helical transmembrane passes span 386–406 (LTAV…GGAV), 410–430 (IAGG…FIYV), and 448–468 (SLLE…IAHL).

The protein belongs to the ZIP transporter (TC 2.A.5) family. KE4/Catsup subfamily. Homodimer. Methylation at some His residue by METTL9 leads to reduced zinc-binding. Post-translationally, rapidly phosphorylated by CK2 following Zn(2+) treatment. This phosphorylation is required for efficient cytosolic Zn(2+) release.

It is found in the endoplasmic reticulum membrane. The protein localises to the golgi apparatus. The protein resides in the cis-Golgi network membrane. The enzyme catalyses Zn(2+)(in) = Zn(2+)(out). Its function is as follows. Transports Zn(2+) from the endoplasmic reticulum (ER)/Golgi apparatus to the cytosol, playing an essential role in the regulation of cytosolic zinc levels. Acts as a gatekeeper of zinc release from intracellular stores, requiring post-translational activation by phosphorylation, resulting in activation of multiple downstream pathways leading to cell growth and proliferation. Has an essential role in B cell development and is required for proper B cell receptor signaling. Plays an important role in maintaining intestinal epithelial homeostasis and skin dermis development by regulating ER function. Controls cell signaling pathways involved in glucose metabolism in skeletal muscle. Has a protective role against ER stress in different biological contexts. Mediates Zn(2+)-induced ferroptosis. The sequence is that of Zinc transporter SLC39A7 from Pongo abelii (Sumatran orangutan).